Consider the following 268-residue polypeptide: Tryptophan synthase alpha chain (268 aa).

Active-site proton acceptor residues include Glu49 and Asp60.

It belongs to the TrpA family. In terms of assembly, tetramer of two alpha and two beta chains.

It carries out the reaction (1S,2R)-1-C-(indol-3-yl)glycerol 3-phosphate + L-serine = D-glyceraldehyde 3-phosphate + L-tryptophan + H2O. It functions in the pathway amino-acid biosynthesis; L-tryptophan biosynthesis; L-tryptophan from chorismate: step 5/5. In terms of biological role, the alpha subunit is responsible for the aldol cleavage of indoleglycerol phosphate to indole and glyceraldehyde 3-phosphate. The sequence is that of Tryptophan synthase alpha chain from Yersinia enterocolitica serotype O:8 / biotype 1B (strain NCTC 13174 / 8081).